Consider the following 67-residue polypeptide: Toxin Cex8 (67 aa).

A signal peptide is located at residue Ala-1. The LCN-type CS-alpha/beta domain occupies 2 to 65 (KEGYLVNIYT…SYPYPEKSCG (64 aa)). 4 disulfides stabilise this stretch: Cys-13–Cys-64, Cys-17–Cys-40, Cys-26–Cys-45, and Cys-30–Cys-47. A Cysteine amide modification is found at Cys-64. The propeptide occupies 65–67 (GRK).

This sequence belongs to the long (4 C-C) scorpion toxin superfamily. Sodium channel inhibitor family. Beta subfamily. Expressed by the venom gland.

It is found in the secreted. Beta toxins bind voltage-independently at site-4 of sodium channels (Nav) and shift the voltage of activation toward more negative potentials thereby affecting sodium channel activation and promoting spontaneous and repetitive firing. The chain is Toxin Cex8 from Centruroides exilicauda (Bark scorpion).